Reading from the N-terminus, the 1637-residue chain is Acrosomal protein KIAA1210 (1637 aa).

10 disordered regions span residues 44–121 (RFSS…LSIS), 141–293 (RTTT…KNEW), 341–404 (PTTT…KKKD), 438–759 (VCGE…SQSE), 865–896 (PKLP…EGST), 935–975 (SKYS…FQPL), 1017–1057 (LQPW…IPSQ), 1090–1137 (FPFQ…SRRA), 1182–1238 (SQTI…SKSF), and 1539–1558 (NKGD…PAFS). The segment covering 103–114 (HRSKSLKIKSQR) has biased composition (basic residues). Positions 141–156 (RTTTTFRRRSSQCSST) are enriched in low complexity. Over residues 170-190 (SESSTQQFSGFSTPATSQGCL) the composition is skewed to polar residues. The span at 229 to 249 (AKEKTTTKTKEAEQGEQKVDS) shows a compositional bias: basic and acidic residues. A compositionally biased stretch (low complexity) spans 250 to 261 (TELSSQEQSSKT). Positions 341-353 (PTTTEAEVTTVQK) are enriched in polar residues. The span at 355–374 (PSDKGDVERELADIDVEAQK) shows a compositional bias: basic and acidic residues. Positions 508 to 526 (TGETSSDSKSTSEYESSSE) are enriched in low complexity. Acidic residues predominate over residues 550–572 (ADDEEDGDDEKEEKDNDDDDEEN). Positions 689–698 (DLSSSEQEQQ) are enriched in low complexity. Polar residues-rich tracts occupy residues 745 to 759 (SPTQ…SQSE), 879 to 896 (GKQS…EGST), 935 to 956 (SKYS…STSA), 964 to 975 (SQPSVTPKFQPL), and 1017 to 1030 (LQPW…QVSV).

In terms of assembly, interacts with TOP2B. In terms of tissue distribution, predominantly expressed in testis (at protein level).

The protein localises to the cytoplasmic vesicle. It is found in the secretory vesicle. The protein resides in the acrosome. This Mus musculus (Mouse) protein is Acrosomal protein KIAA1210.